A 553-amino-acid polypeptide reads, in one-letter code: Probable malate:quinone oxidoreductase (553 aa).

The segment covering 534 to 543 (QLKPQVQPQP) has biased composition (low complexity). A disordered region spans residues 534–553 (QLKPQVQPQPAHKAVADIAL).

The protein belongs to the MQO family. It depends on FAD as a cofactor.

The catalysed reaction is (S)-malate + a quinone = a quinol + oxaloacetate. It participates in carbohydrate metabolism; tricarboxylic acid cycle; oxaloacetate from (S)-malate (quinone route): step 1/1. The chain is Probable malate:quinone oxidoreductase from Citrobacter koseri (strain ATCC BAA-895 / CDC 4225-83 / SGSC4696).